The sequence spans 290 residues: OTU domain-containing protein 6A (290 aa).

The segment at 27 to 117 is disordered; sequence QTLKASVPKN…RRHQERMPAA (91 aa). The span at 49–68 shows a compositional bias: basic and acidic residues; sequence SRLEAEMEQRHKQELEKFGE. Residues 95 to 108 are compositionally biased toward basic residues; the sequence is KAQKRRDRRAHQER. Positions 142–276 constitute an OTU domain; sequence LEMKTIPADG…GEHYNSVKPI (135 aa). Positions 147–153 are cys-loop; sequence IPADGHC. The active site involves Asp150. The Nucleophile role is filled by Cys153. The variable-loop stretch occupies residues 211 to 221; it reads IVHNASWGGQL. Positions 259–269 are his-loop; the sequence is YLHYACDFGEH. Residue His269 is part of the active site.

It carries out the reaction Thiol-dependent hydrolysis of ester, thioester, amide, peptide and isopeptide bonds formed by the C-terminal Gly of ubiquitin (a 76-residue protein attached to proteins as an intracellular targeting signal).. Functionally, deubiquitinating enzyme that hydrolyzes 'Lys-27'-, 'Lys-29'- and 'Lys-33'-linked polyubiquitin chains. Also able to hydrolyze 'Lys-11'-linked ubiquitin chains. This is OTU domain-containing protein 6A (Otud6a) from Mus musculus (Mouse).